The primary structure comprises 33 residues: uncharacterized protein (33 aa).

Its subcellular location is the cytoplasm. It is found in the nucleus. This is an uncharacterized protein from Schizosaccharomyces pombe (strain 972 / ATCC 24843) (Fission yeast).